Consider the following 183-residue polypeptide: 2-epi-5-epi-valiolone epimerase (183 aa).

The region spanning 11 to 155 (AVHHVAYTVP…WGMQLELINL (145 aa)) is the VOC domain. A divalent metal cation is bound by residues His14, Glu76, His99, and Glu151.

As to quaternary structure, homodimer. A divalent metal cation serves as cofactor.

The enzyme catalyses 2-epi-5-epi-valiolone = 5-epi-valiolone. The protein operates within antibiotic biosynthesis. Its function is as follows. Catalyzes the epimerization of 2-epi-5-epi-valiolone to 5-epi-valiolone. Involved in cetoniacytone A biosynthesis. This chain is 2-epi-5-epi-valiolone epimerase, found in Actinomyces sp.